A 295-amino-acid chain; its full sequence is Bifunctional protein FolD (295 aa).

Residues 166–168 (GRS), Ser-195, and Ile-236 each bind NADP(+).

This sequence belongs to the tetrahydrofolate dehydrogenase/cyclohydrolase family. Homodimer.

The enzyme catalyses (6R)-5,10-methylene-5,6,7,8-tetrahydrofolate + NADP(+) = (6R)-5,10-methenyltetrahydrofolate + NADPH. The catalysed reaction is (6R)-5,10-methenyltetrahydrofolate + H2O = (6R)-10-formyltetrahydrofolate + H(+). Its pathway is one-carbon metabolism; tetrahydrofolate interconversion. Functionally, catalyzes the oxidation of 5,10-methylenetetrahydrofolate to 5,10-methenyltetrahydrofolate and then the hydrolysis of 5,10-methenyltetrahydrofolate to 10-formyltetrahydrofolate. The polypeptide is Bifunctional protein FolD (Chlorobium luteolum (strain DSM 273 / BCRC 81028 / 2530) (Pelodictyon luteolum)).